Here is a 198-residue protein sequence, read N- to C-terminus: dITP/XTP pyrophosphatase (198 aa).

7–12 (THNPHK) is a binding site for substrate. The Mg(2+) site is built by Glu-40 and Asp-69. Asp-69 serves as the catalytic Proton acceptor. Residues Thr-70, 151 to 154 (FGYD), Lys-174, and 179 to 180 (HR) each bind substrate.

This sequence belongs to the HAM1 NTPase family. In terms of assembly, homodimer. Mg(2+) serves as cofactor.

The enzyme catalyses XTP + H2O = XMP + diphosphate + H(+). It carries out the reaction dITP + H2O = dIMP + diphosphate + H(+). The catalysed reaction is ITP + H2O = IMP + diphosphate + H(+). Pyrophosphatase that catalyzes the hydrolysis of nucleoside triphosphates to their monophosphate derivatives, with a high preference for the non-canonical purine nucleotides XTP (xanthosine triphosphate), dITP (deoxyinosine triphosphate) and ITP. Seems to function as a house-cleaning enzyme that removes non-canonical purine nucleotides from the nucleotide pool, thus preventing their incorporation into DNA/RNA and avoiding chromosomal lesions. This is dITP/XTP pyrophosphatase from Thermoanaerobacter sp. (strain X514).